Reading from the N-terminus, the 482-residue chain is O-acyltransferase ausP (482 aa).

Catalysis depends on proton acceptor residues H180 and D412.

This sequence belongs to the plant acyltransferase family. Monomer.

It participates in secondary metabolite biosynthesis; terpenoid biosynthesis. O-acyltransferase; part of the gene cluster B that mediates the biosynthesis of the fungal meroterpenoid acetoxydehydroaustin. The first step of the pathway is the synthesis of 3,5-dimethylorsellinic acid by the polyketide synthase ausA. 3,5-dimethylorsellinic acid is then prenylated by the polyprenyl transferase ausN. Further epoxidation by the FAD-dependent monooxygenase ausM and cyclization by the probable terpene cyclase ausL lead to the formation of protoaustinoid A. Protoaustinoid A is then oxidized to spiro-lactone preaustinoid A3 by the combined action of the FAD-binding monooxygenases ausB and ausC, and the dioxygenase ausE. Acid-catalyzed keto-rearrangement and ring contraction of the tetraketide portion of preaustinoid A3 by ausJ lead to the formation of preaustinoid A4. The aldo-keto reductase ausK, with the help of ausH, is involved in the next step by transforming preaustinoid A4 into isoaustinone which is in turn hydroxylated by the P450 monooxygenase ausI to form austinolide. The cytochrome P450 monooxygenase ausG then modifies austinolide to austinol. Austinol is further acetylated to austin by the O-acetyltransferase ausP, which spontaneously changes to dehydroaustin. The cytochrome P450 monooxygenase then converts dehydroaustin is into 7-dehydrodehydroaustin. The hydroxylation catalyzed by ausR permits the second O-acetyltransferase ausQ to add an additional acetyl group to the molecule, leading to the formation of acetoxydehydroaustin. Due to genetic rearrangements of the clusters and the subsequent loss of some enzymes, the end product of the Penicillium brasilianum austinoid biosynthesis clusters is acetoxydehydroaustin. In Penicillium brasilianum, this protein is O-acyltransferase ausP.